Reading from the N-terminus, the 199-residue chain is Protein p2 (199 aa).

The protein resides in the host cytoplasm. In Avena sativa (Oat), this protein is Protein p2.